A 296-amino-acid polypeptide reads, in one-letter code: 4-hydroxybenzoate octaprenyltransferase (296 aa).

9 helical membrane-spanning segments follow: residues 29–49 (IGIYLLLWPTLWALWVAAEGV), 55–75 (LFIFVFGVILMRAAGCVINDY), 102–122 (ALVLFAVLVTASFVLVLFTNA), 124–141 (TIWLSFGGLALAACYPFM), 146–166 (FYPQVVLGAAFSWGMPMAFTA), 169–189 (GSLPPEAWLLYIANLLWTVAY), 216–236 (ADRLIIASLQGLALLCLLLAG), 239–259 (FELGVWFHAGLLVAAACFVWE), and 271–291 (CFNAFLHNHWAGLAIFVGIVL).

The protein belongs to the UbiA prenyltransferase family. Mg(2+) serves as cofactor.

Its subcellular location is the cell inner membrane. It catalyses the reaction all-trans-octaprenyl diphosphate + 4-hydroxybenzoate = 4-hydroxy-3-(all-trans-octaprenyl)benzoate + diphosphate. Its pathway is cofactor biosynthesis; ubiquinone biosynthesis. Functionally, catalyzes the prenylation of para-hydroxybenzoate (PHB) with an all-trans polyprenyl group. Mediates the second step in the final reaction sequence of ubiquinone-8 (UQ-8) biosynthesis, which is the condensation of the polyisoprenoid side chain with PHB, generating the first membrane-bound Q intermediate 3-octaprenyl-4-hydroxybenzoate. This is 4-hydroxybenzoate octaprenyltransferase from Ectopseudomonas mendocina (strain ymp) (Pseudomonas mendocina).